Consider the following 185-residue polypeptide: Ribosome-recycling factor (185 aa).

The tract at residues Asp-137–Asp-158 is disordered.

This sequence belongs to the RRF family.

The protein localises to the cytoplasm. In terms of biological role, responsible for the release of ribosomes from messenger RNA at the termination of protein biosynthesis. May increase the efficiency of translation by recycling ribosomes from one round of translation to another. In Desulfitobacterium hafniense (strain Y51), this protein is Ribosome-recycling factor.